Reading from the N-terminus, the 503-residue chain is Lithocholate 6-beta-hydroxylase (503 aa).

Cysteine 442 contacts heme.

This sequence belongs to the cytochrome P450 family. The cofactor is heme.

It localises to the endoplasmic reticulum membrane. The protein localises to the microsome membrane. It carries out the reaction lithocholate + reduced [NADPH--hemoprotein reductase] + O2 = 6beta-hydroxylithocholate + oxidized [NADPH--hemoprotein reductase] + H2O + H(+). Functionally, catalyzes the 6 beta-hydroxylation of lithocholic acid and steroid hormones. The sequence is that of Lithocholate 6-beta-hydroxylase (CYP3A10) from Mesocricetus auratus (Golden hamster).